The sequence spans 599 residues: Estrogen receptor (599 aa).

The segment at 1 to 188 is modulating (transactivation AF-1); mediates interaction with MACROD1; sequence MTMTLHTKAS…IMESAKETRY (188 aa). The O-linked (GlcNAc) serine glycan is linked to Ser10. Positions 35–47 are required for interaction with NCOA1; it reads MERALGEVYVDNS. The interaction with DDX5; self-association stretch occupies residues 35 to 178; that stretch reads MERALGEVYV…LSSSNEKGNM (144 aa). Thr50 is a glycosylation site (O-linked (GlcNAc) threonine). Residues Ser108 and Ser110 each carry the phosphoserine; by CDK2 modification. Ser122 carries the phosphoserine modification. Positions 147 to 175 are disordered; the sequence is DTGPPAFYRSNSDNRRQNGRERLSSSNEK. Residues 158-169 are compositionally biased toward basic and acidic residues; that stretch reads SDNRRQNGRERL. Ser171 is modified (phosphoserine; by CK2). 2 consecutive NR C4-type zinc fingers follow at residues 189 to 209 and 225 to 249; these read CAVCNDYASGYHYGVWSCEGC and CPATNQCTIDKNRRKSCQACRLRKC. Positions 189–254 form a DNA-binding region, nuclear receptor; it reads CAVCNDYASG…RLRKCYEVGM (66 aa). The mediates interaction with DNTTIP2 stretch occupies residues 189–314; the sequence is CAVCNDYASG…TKKNSPALSL (126 aa). The hinge stretch occupies residues 255–314; that stretch reads MKGGIRKDRRGGRMLKHKRQRDDLEGRNEMGASGDMRAANLWPSPLVIKHTKKNSPALSL. Arg264 carries the post-translational modification Asymmetric dimethylarginine; by PRMT1. The segment at 266–599 is interaction with AKAP13; it reads GRMLKHKRQR…PEAEGFPNTI (334 aa). The interval 268-599 is self-association; it reads MLKHKRQRDD…PEAEGFPNTI (332 aa). One can recognise an NR LBD domain in the interval 315 to 551; the sequence is TADQMVSALL…DLLLEMLDAH (237 aa). The interval 315–599 is transactivation AF-2; it reads TADQMVSALL…PEAEGFPNTI (285 aa). Residues Glu357 and Arg398 each contribute to the 17beta-estradiol site. The S-palmitoyl cysteine moiety is linked to residue Cys451. Residue His528 coordinates 17beta-estradiol. At Tyr541 the chain carries Phosphotyrosine; by Tyr-kinases. Residues 557 to 581 form a disordered region; sequence ASRMGVPPEEPSQTQLATTSSTSAH. A compositionally biased stretch (low complexity) spans 568–581; that stretch reads SQTQLATTSSTSAH. O-linked (GlcNAc) threonine glycosylation is present at Thr575.

It belongs to the nuclear hormone receptor family. NR3 subfamily. Interacts with BCAS3. Binds DNA as a homodimer. Can form a heterodimer with ESR2. Interacts with coactivator NCOA5. Interacts with PELP1, the interaction is enhanced by 17-beta-estradiol; the interaction increases ESR1 transcriptional activity. Interacts with NCOA7; the interaction is ligand-inducible. Interacts with AKAP13, CUEDC2, HEXIM1, KDM5A, MAP1S, SMARD1, and UBE1C. Interacts with MUC1; the interaction is stimulated by 7 beta-estradiol (E2) and enhances ESR1-mediated transcription. Interacts with DNTTIP2, and UIMC1. Interacts with KMT2D/MLL2. Interacts with ATAD2; the interaction is enhanced by estradiol. Interacts with KIF18A and LDB1. Interacts with RLIM (via its C-terminus). Interacts with MACROD1. Interacts with SH2D4A and PLCG. Interacts with SH2D4A; the interaction blocks binding to PLCG and inhibits estrogen-induced cell proliferation. Interacts with DYNLL1. Interacts with CCDC62; the interaction requires estradiol and appears to enhance the transcription of target genes. Interacts with NR2C1; the interaction prevents homodimerization of ESR1 and suppresses its transcriptional activity and cell growth. Interacts with DNAAF4. Interacts with PRMT2. Interacts with RBFOX2. Interacts with EP300; the interaction is estrogen-dependent and enhanced by CITED1. Interacts with CITED1; the interaction is estrogen-dependent. Interacts with FAM120B, FOXL2, PHB2 and SLC30A9. Interacts with coactivators NCOA3 and NCOA6. Interacts with STK3/MST2 only in the presence of SAV1 and vice-versa. Binds to CSNK1D. Interacts with NCOA2; NCOA2 can interact with ESR1 AF-1 and AF-2 domains simultaneously and mediate their transcriptional synergy. Interacts with DDX5. Interacts with NCOA1; the interaction seems to require a self-association of N-terminal and C-terminal regions. Interacts with ZNF366, DDX17, NFKB1, RELA, SP1 and SP3. Interacts with NRIP1. Interacts with GPER1; the interaction occurs in an estrogen-dependent manner. Interacts with CLOCK and the interaction is stimulated by estrogen. Interacts with BCAS3. Interacts with TRIP4 (ufmylated); estrogen dependent. Interacts with LMTK3; the interaction phosphorylates ESR1 (in vitro) and protects it against proteasomal degradation. Interacts with CCAR2 (via N-terminus) in a ligand-independent manner. Interacts with ZFHX3. Interacts with SFR1 in a ligand-dependent and -independent manner. Interacts with DCAF13, LATS1 and DCAF1; regulates ESR1 ubiquitination and ubiquitin-mediated proteasomal degradation. Interacts (via DNA-binding domain) with POU4F2 isoform 2 (C-terminus); this interaction increases the estrogen receptor ESR1 transcriptional activity in a DNA- and ligand 17-beta-estradiol-independent manner. Interacts with ESRRB isoform 1. Interacts with UBE3A and WBP2. Interacts with GTF2B. Interacts with RBM39. In the absence of hormonal ligand, interacts with TACC1. Interacts with PI3KR1 or PI3KR2 and PTK2/FAK1. Interacts with SRC. Interacts with BAG1; the interaction is promoted in the absence of estradiol (17-beta-estradiol/E2). Interacts with and ubiquitinated by STUB1; the interaction is promoted in the absence of estradiol (17-beta-estradiol/E2). Interacts with NEDD8. Post-translationally, phosphorylated by cyclin A/CDK2 and CK1. Phosphorylation probably enhances transcriptional activity. Dephosphorylation at Ser-122 by PPP5C inhibits its transactivation activity. Phosphorylated by LMTK3 (in vitro). In terms of processing, ubiquitinated. Deubiquitinated by OTUB1. Palmitoylated at Cys-451 by ZDHHC7 and ZDHHC21. This modification is required for plasma membrane targeting and for rapid intracellular signaling via ERK and AKT kinases and cAMP generation, but not for signaling mediated by the nuclear hormone receptor. Post-translationally, ubiquitinated; regulated by LATS1 via DCAF1 it leads to ESR1 proteasomal degradation. Deubiquitinated by OTUB1. Ubiquitinated by STUB1/CHIP; in the CA1 hippocampal region following loss of endogenous circulating estradiol (17-beta-estradiol/E2). Ubiquitinated by UBR5, leading to its degradation: UBR5 specifically recognizes and binds ligand-bound ESR1 when it is not associated with coactivators (NCOAs). In presence of NCOAs, the UBR5-degron is not accessible, preventing its ubiquitination and degradation. In terms of processing, dimethylated by PRMT1 at Arg-264. The methylation may favor cytoplasmic localization. Demethylated by JMJD6 at Arg-264.

Its subcellular location is the nucleus. It localises to the cytoplasm. It is found in the golgi apparatus. The protein resides in the cell membrane. Nuclear hormone receptor. The steroid hormones and their receptors are involved in the regulation of eukaryotic gene expression and affect cellular proliferation and differentiation in target tissues. Ligand-dependent nuclear transactivation involves either direct homodimer binding to a palindromic estrogen response element (ERE) sequence or association with other DNA-binding transcription factors, such as AP-1/c-Jun, c-Fos, ATF-2, Sp1 and Sp3, to mediate ERE-independent signaling. Ligand binding induces a conformational change allowing subsequent or combinatorial association with multiprotein coactivator complexes through LXXLL motifs of their respective components. Mutual transrepression occurs between the estrogen receptor (ER) and NF-kappa-B in a cell-type specific manner. Decreases NF-kappa-B DNA-binding activity and inhibits NF-kappa-B-mediated transcription from the IL6 promoter and displace RELA/p65 and associated coregulators from the promoter. Recruited to the NF-kappa-B response element of the CCL2 and IL8 promoters and can displace CREBBP. Present with NF-kappa-B components RELA/p65 and NFKB1/p50 on ERE sequences. Can also act synergistically with NF-kappa-B to activate transcription involving respective recruitment adjacent response elements; the function involves CREBBP. Can activate the transcriptional activity of TFF1. Also mediates membrane-initiated estrogen signaling involving various kinase cascades. Essential for MTA1-mediated transcriptional regulation of BRCA1 and BCAS3. Maintains neuronal survival in response to ischemic reperfusion injury when in the presence of circulating estradiol (17-beta-estradiol/E2). The protein is Estrogen receptor (Esr1) of Mus musculus (Mouse).